A 338-amino-acid chain; its full sequence is Glyceraldehyde-3-phosphate dehydrogenase (338 aa).

NAD(+)-binding positions include 12-13, Asp38, and Ser125; that span reads RI. D-glyceraldehyde 3-phosphate is bound by residues 155 to 157, Thr186, 216 to 217, and Arg239; these read SCT and TG. Cys156 (nucleophile) is an active-site residue. NAD(+) is bound at residue Asn320.

This sequence belongs to the glyceraldehyde-3-phosphate dehydrogenase family. As to quaternary structure, homotetramer.

Its subcellular location is the cytoplasm. It catalyses the reaction D-glyceraldehyde 3-phosphate + phosphate + NAD(+) = (2R)-3-phospho-glyceroyl phosphate + NADH + H(+). It participates in carbohydrate degradation; glycolysis; pyruvate from D-glyceraldehyde 3-phosphate: step 1/5. Catalyzes the oxidative phosphorylation of glyceraldehyde 3-phosphate (G3P) to 1,3-bisphosphoglycerate (BPG) using the cofactor NAD. The first reaction step involves the formation of a hemiacetal intermediate between G3P and a cysteine residue, and this hemiacetal intermediate is then oxidized to a thioester, with concomitant reduction of NAD to NADH. The reduced NADH is then exchanged with the second NAD, and the thioester is attacked by a nucleophilic inorganic phosphate to produce BPG. The chain is Glyceraldehyde-3-phosphate dehydrogenase (gap) from Lactobacillus delbrueckii subsp. bulgaricus.